The sequence spans 165 residues: Large ribosomal subunit protein uL10 (165 aa).

It belongs to the universal ribosomal protein uL10 family. Part of the ribosomal stalk of the 50S ribosomal subunit. The N-terminus interacts with L11 and the large rRNA to form the base of the stalk. The C-terminus forms an elongated spine to which L12 dimers bind in a sequential fashion forming a multimeric L10(L12)X complex.

In terms of biological role, forms part of the ribosomal stalk, playing a central role in the interaction of the ribosome with GTP-bound translation factors. This chain is Large ribosomal subunit protein uL10, found in Serratia proteamaculans (strain 568).